Reading from the N-terminus, the 415-residue chain is Lupus La protein homolog (415 aa).

One can recognise an HTH La-type RNA-binding domain in the interval 7–99 (NEKMAALEAK…RRSPSRPLPE (93 aa)). Phosphoserine is present on residues Ser-92 and Ser-94. The RRM domain maps to 111–187 (RSVYIKGFPT…TNLLILFKED (77 aa)). Position 116 is an N6-acetyllysine (Lys-116). Thr-120 is modified (phosphothreonine). An N6-acetyllysine mark is found at Lys-128 and Lys-327. Positions 226–343 (EGKMGCLLKF…HAARRFKGSH (118 aa)) constitute a xRRM domain. Residues 323–415 (ESLNKWKSKG…KKRENGARDK (93 aa)) form a disordered region. A compositionally biased stretch (basic residues) spans 328-341 (WKSKGGHAARRFKG). Position 356 is an N6-acetyllysine (Lys-356). Thr-377 is subject to Phosphothreonine. Residues 377–415 (TRFDDDDHRRGPVKRGIDGRDREEPASKHKKRENGARDK) are compositionally biased toward basic and acidic residues.

In terms of assembly, interacts with DDX15. May interact with RUFY1. Phosphorylated.

Its subcellular location is the nucleus. Binds to the 3' poly(U) terminus of nascent RNA polymerase III transcripts, protecting them from exonuclease digestion and facilitating their folding and maturation. The sequence is that of Lupus La protein homolog (Ssb) from Rattus norvegicus (Rat).